Consider the following 326-residue polypeptide: Type II secretion system protein K (326 aa).

The propeptide at 1 to 7 is leader sequence; it reads MNHRQRG. The helical transmembrane segment at 8 to 28 threads the bilayer; it reads IALLMVLLILALMMVLASAMT. Over 29-326 the chain is Periplasmic; it reads ERSARMYQQT…RYGIYWVADE (298 aa).

The protein belongs to the GSP K family. As to quaternary structure, type II secretion is composed of four main components: the outer membrane complex, the inner membrane complex, the cytoplasmic secretion ATPase and the periplasm-spanning pseudopilus. Interacts with core component PulG. In terms of processing, cleaved by prepilin peptidase.

The protein localises to the cell inner membrane. Functionally, component of the type II secretion system required for the energy-dependent secretion of extracellular factors such as proteases and toxins from the periplasm. Plays a role in pseudopilus assembly and seems to control its length. Interacts with the pseudopilus tip complex that is critical for the recognition and binding of secretion substrates. This Klebsiella pneumoniae protein is Type II secretion system protein K (pulK).